The following is a 40-amino-acid chain: Snaclec tokaracetin subunit alpha (40 aa).

The 40-residue stretch at 1–40 folds into the C-type lectin domain; that stretch reads DCPSGWSSFKQYCYKPFKQLKTWEDAERFCLEQVKGAHLV. Residues C2 and C13 are joined by a disulfide bond.

Belongs to the snaclec family. Heterodimer of subunits alpha and beta; disulfide-linked. Expressed by the venom gland.

It localises to the secreted. Its function is as follows. Platelet antagonist that specifically and reversibly binds to a site on platelet glycoprotein Ibalpha (GP1BA) close to or identical with the site for vWF binding. It inhibits the binding of vWF to platelets and vWF-dependent shear-induced platelet aggregation. The polypeptide is Snaclec tokaracetin subunit alpha (Protobothrops tokarensis (Tokara habu)).